Consider the following 359-residue polypeptide: WW domain-binding protein wbp-11 (359 aa).

3 disordered regions span residues 1 to 38 (MPSI…DRQQ), 235 to 264 (PSSY…NPMG), and 317 to 341 (PGDN…QKQA). Residues 8–27 (KSGERYRAPTDQARKMDRKK) show a composition bias toward basic and acidic residues. The segment covering 245-256 (MPHHHHHHHPHA) has biased composition (basic residues).

In terms of biological role, activates pre-mRNA splicing. May inhibit PP1 phosphatase activity. This is WW domain-binding protein wbp-11 from Caenorhabditis elegans.